Reading from the N-terminus, the 889-residue chain is Valine--tRNA ligase (889 aa).

The 'HIGH' region motif lies at 50–60; that stretch reads PNVTGKLHLGH. Positions 532 to 536 match the 'KMSKS' region motif; that stretch reads KMSKS. Position 535 (lysine 535) interacts with ATP. Residues 816 to 889 adopt a coiled-coil conformation; that stretch reads LAELVDLDEE…QRLVDIKAEA (74 aa).

Belongs to the class-I aminoacyl-tRNA synthetase family. ValS type 1 subfamily. As to quaternary structure, monomer.

Its subcellular location is the cytoplasm. It carries out the reaction tRNA(Val) + L-valine + ATP = L-valyl-tRNA(Val) + AMP + diphosphate. Its function is as follows. Catalyzes the attachment of valine to tRNA(Val). As ValRS can inadvertently accommodate and process structurally similar amino acids such as threonine, to avoid such errors, it has a 'posttransfer' editing activity that hydrolyzes mischarged Thr-tRNA(Val) in a tRNA-dependent manner. The sequence is that of Valine--tRNA ligase from Lactiplantibacillus plantarum (strain ATCC BAA-793 / NCIMB 8826 / WCFS1) (Lactobacillus plantarum).